We begin with the raw amino-acid sequence, 90 residues long: Small ribosomal subunit protein uS15c (90 aa).

This sequence belongs to the universal ribosomal protein uS15 family. Part of the 30S ribosomal subunit.

Its subcellular location is the plastid. It localises to the chloroplast. The protein is Small ribosomal subunit protein uS15c (rps15) of Citrus sinensis (Sweet orange).